Reading from the N-terminus, the 318-residue chain is UDP-N-acetylenolpyruvoylglucosamine reductase (318 aa).

Residues valine 39–glycine 202 form the FAD-binding PCMH-type domain. Residue arginine 182 is part of the active site. Positions aspartate 214–proline 223 are enriched in basic and acidic residues. The segment at aspartate 214 to asparagine 235 is disordered. Serine 231 (proton donor) is an active-site residue. Glutamate 301 is an active-site residue.

This sequence belongs to the MurB family. FAD is required as a cofactor.

It localises to the cytoplasm. It carries out the reaction UDP-N-acetyl-alpha-D-muramate + NADP(+) = UDP-N-acetyl-3-O-(1-carboxyvinyl)-alpha-D-glucosamine + NADPH + H(+). It participates in cell wall biogenesis; peptidoglycan biosynthesis. Functionally, cell wall formation. In Anaeromyxobacter sp. (strain Fw109-5), this protein is UDP-N-acetylenolpyruvoylglucosamine reductase.